A 378-amino-acid polypeptide reads, in one-letter code: Glutamate 5-kinase (378 aa).

Position 19 (Lys-19) interacts with ATP. Ser-59, Asp-146, and Asn-158 together coordinate substrate. Residues 178–179 (TD) and 220–226 (TGGMATK) contribute to the ATP site. The region spanning 285 to 363 (QGQIQVDAGA…GEIGEILGYK (79 aa)) is the PUA domain.

It belongs to the glutamate 5-kinase family.

It localises to the cytoplasm. The enzyme catalyses L-glutamate + ATP = L-glutamyl 5-phosphate + ADP. The protein operates within amino-acid biosynthesis; L-proline biosynthesis; L-glutamate 5-semialdehyde from L-glutamate: step 1/2. Catalyzes the transfer of a phosphate group to glutamate to form L-glutamate 5-phosphate. This chain is Glutamate 5-kinase, found in Moorella thermoacetica (strain ATCC 39073 / JCM 9320).